Reading from the N-terminus, the 637-residue chain is DNA gyrase subunit B (637 aa).

Residues Cys-422–Pro-536 form the Toprim domain. Residues Glu-428, Asp-501, and Asp-503 each coordinate Mg(2+).

The protein belongs to the type II topoisomerase GyrB family. Heterotetramer, composed of two GyrA and two GyrB chains. In the heterotetramer, GyrA contains the active site tyrosine that forms a transient covalent intermediate with DNA, while GyrB binds cofactors and catalyzes ATP hydrolysis. Requires Mg(2+) as cofactor. Mn(2+) serves as cofactor. Ca(2+) is required as a cofactor.

Its subcellular location is the cytoplasm. The catalysed reaction is ATP-dependent breakage, passage and rejoining of double-stranded DNA.. Functionally, a type II topoisomerase that negatively supercoils closed circular double-stranded (ds) DNA in an ATP-dependent manner to modulate DNA topology and maintain chromosomes in an underwound state. Negative supercoiling favors strand separation, and DNA replication, transcription, recombination and repair, all of which involve strand separation. Also able to catalyze the interconversion of other topological isomers of dsDNA rings, including catenanes and knotted rings. Type II topoisomerases break and join 2 DNA strands simultaneously in an ATP-dependent manner. The polypeptide is DNA gyrase subunit B (Treponema pallidum (strain Nichols)).